Consider the following 490-residue polypeptide: MTKQSADSNAKSGVTSEICHWASNLATDDIPSDVLERAKYLILDGIACAWVGARVPWSEKYVQATMSFEPPGACRVIGYGQKLGPVAAAMTNSAFIQATELDDYHSEAPLHSASIVLPAVFAASEVLAEQGKTISGIDVILAAIVGFESGPRIGKAIYGSDLLNNGWHCGAVYGAPAGALATGKLLGLTPDSMEDALGIACTQACGLMSAQYGGMVKRVQHGFAARNGLLGGLLAHGGYEAMKGVLERSYGGFLKMFTKGNGREPPYKEEEVVAGLGSFWHTFTIRIKLYACCGLVHGPVEAIENLQGRYPELLNRANLSNIRHVHVQLSTASNSHCGWIPEERPISSIAGQMSVAYILAVQLVDQQCLLSQFSEFDDNLERPEVWDLARKVTSSQSEEFDQDGNCLSAGRVRIEFNDGSSITESVEKPLGVKEPMPNERILHKYRTLAGSVTDESRVKEIEDLVLGLDRLTDISPLLELLNCPVKSPLV.

The protein belongs to the PrpD family.

The protein resides in the mitochondrion. It catalyses the reaction cis-aconitate + H(+) = itaconate + CO2. Functionally, involved in the production of itaconic acid, a soluble unsaturated dicarboxylic acid mainly produced from sugars. The chain is Cis-aconitate decarboxylase (cad1) from Aspergillus terreus.